The sequence spans 391 residues: 12-oxophytodienoate reductase 3 (391 aa).

Residue Met-1 is modified to N-acetylmethionine. Thr-2 carries the N-acetylthreonine; in 12-oxophytodienoate reductase 3, N-terminally processed modification. FMN-binding positions include 31–33 (PMT), Gly-64, and Gln-106. Substrate is bound at residue His-186. Tyr-191 functions as the Proton donor in the catalytic mechanism. FMN is bound at residue Arg-238. Arg-284 is a binding site for substrate. Residues 320-322 (SGG) and 343-344 (GR) each bind FMN. A Microbody targeting signal motif is present at residues 389–391 (SRL).

Belongs to the NADH:flavin oxidoreductase/NADH oxidase family. FMN serves as cofactor. In terms of tissue distribution, expressed in green seedling, leaves, flowers (anthers, pistil, petal and stamen), and to a lower extent in roots and siliques. Specifically expressed in filament during anther dehiscence initiation.

Its subcellular location is the peroxisome. The catalysed reaction is (1S,2S)-OPC-8 + NADP(+) = (9S,13S,15Z)-12-oxophyto-10,15-dienoate + NADPH + H(+). The protein operates within lipid metabolism; oxylipin biosynthesis. Functionally, specifically cleaves olefinic bonds in cyclic enones. Involved in the biosynthesis of jasmonic acid (JA) and perhaps in biosynthesis or metabolism of other oxylipin signaling moleclules. Required for the spatial and temporal regulation of JA levels during dehiscence of anthers, promoting the stomium degeneration program. In vitro, reduces 9S,13S-12-oxophytodienoic acid (9S,13S-OPDA) and 9R,13R-OPDA to 9S,13S-OPC-8:0 and 9R,13R-OPC-8:0, respectively. Can detoxify the explosive 2,4,6-trinitrotoluene (TNT) in vitro by catalyzing its nitroreduction to form hydroxylamino-dinitrotoluene (HADNT). This chain is 12-oxophytodienoate reductase 3, found in Arabidopsis thaliana (Mouse-ear cress).